The sequence spans 356 residues: Outer membrane protein Omp38 (356 aa).

A signal peptide spans 1 to 19; sequence MKLSRIALATMLVAAPLAA. The OmpA-like domain maps to 221–339; it reads ELTEDLNMEL…RVFATITGSR (119 aa). Asparagine 237, aspartate 271, threonine 273, asparagine 279, and arginine 286 together coordinate meso-2,6-diaminopimelate.

It belongs to the outer membrane OOP (TC 1.B.6) superfamily. Homotrimer. Forms a pore with a size of 1.3 nm.

It localises to the cell outer membrane. The protein localises to the host mitochondrion. Its function is as follows. Functions as a porin. Induces apoptosis in human cell lines through caspase-dependent and AIF-dependent pathways. Purified Omp38 enters host cell and localizes to the mitochondria, which presumably leads to a release of proapoptotic molecules such as cytochrome c and AIF (apoptosis-inducing factor). Binds peptidoglycan, contributes to cell wall maintenance. This chain is Outer membrane protein Omp38, found in Acinetobacter baumannii (strain ATCC 19606 / DSM 30007 / JCM 6841 / CCUG 19606 / CIP 70.34 / NBRC 109757 / NCIMB 12457 / NCTC 12156 / 81).